The primary structure comprises 486 residues: Kynureninase 1 (486 aa).

Residues 53-72 (DLKRTTLDPNQEPEHSPTPS) form a disordered region. Pyridoxal 5'-phosphate is bound by residues Leu-146, Thr-147, 174 to 177 (FPSD), Ser-231, Asp-260, His-263, and Tyr-285. At Lys-286 the chain carries N6-(pyridoxal phosphate)lysine. Pyridoxal 5'-phosphate-binding residues include Trp-326 and Asn-354.

Belongs to the kynureninase family. Homodimer. The cofactor is pyridoxal 5'-phosphate.

The protein localises to the cytoplasm. It carries out the reaction L-kynurenine + H2O = anthranilate + L-alanine + H(+). The catalysed reaction is 3-hydroxy-L-kynurenine + H2O = 3-hydroxyanthranilate + L-alanine + H(+). The protein operates within amino-acid degradation; L-kynurenine degradation; L-alanine and anthranilate from L-kynurenine: step 1/1. It participates in cofactor biosynthesis; NAD(+) biosynthesis; quinolinate from L-kynurenine: step 2/3. In terms of biological role, catalyzes the cleavage of L-kynurenine (L-Kyn) and L-3-hydroxykynurenine (L-3OHKyn) into anthranilic acid (AA) and 3-hydroxyanthranilic acid (3-OHAA), respectively. The sequence is that of Kynureninase 1 (bna5-1) from Aspergillus clavatus (strain ATCC 1007 / CBS 513.65 / DSM 816 / NCTC 3887 / NRRL 1 / QM 1276 / 107).